Here is a 258-residue protein sequence, read N- to C-terminus: Aspartate/glutamate leucyltransferase (258 aa).

It belongs to the R-transferase family. Bpt subfamily.

The protein resides in the cytoplasm. The catalysed reaction is N-terminal L-glutamyl-[protein] + L-leucyl-tRNA(Leu) = N-terminal L-leucyl-L-glutamyl-[protein] + tRNA(Leu) + H(+). The enzyme catalyses N-terminal L-aspartyl-[protein] + L-leucyl-tRNA(Leu) = N-terminal L-leucyl-L-aspartyl-[protein] + tRNA(Leu) + H(+). Functions in the N-end rule pathway of protein degradation where it conjugates Leu from its aminoacyl-tRNA to the N-termini of proteins containing an N-terminal aspartate or glutamate. This Rhizobium etli (strain ATCC 51251 / DSM 11541 / JCM 21823 / NBRC 15573 / CFN 42) protein is Aspartate/glutamate leucyltransferase.